Here is a 377-residue protein sequence, read N- to C-terminus: Glutamate 5-kinase (377 aa).

Position 18 (Lys-18) interacts with ATP. The substrate site is built by Ser-55, Asp-142, and Asn-154. ATP-binding positions include 174 to 175 and 216 to 222; these read SD and TGGMKSK. Positions 281 to 359 constitute a PUA domain; sequence QGEVVVDAGA…REIEALLGYK (79 aa).

This sequence belongs to the glutamate 5-kinase family.

The protein localises to the cytoplasm. It carries out the reaction L-glutamate + ATP = L-glutamyl 5-phosphate + ADP. The protein operates within amino-acid biosynthesis; L-proline biosynthesis; L-glutamate 5-semialdehyde from L-glutamate: step 1/2. Its function is as follows. Catalyzes the transfer of a phosphate group to glutamate to form L-glutamate 5-phosphate. The protein is Glutamate 5-kinase of Meiothermus ruber.